Consider the following 699-residue polypeptide: Elongation factor G (699 aa).

Residues 8–288 form the tr-type G domain; the sequence is EDYRNFGIMA…AVVDYLPSPL (281 aa). Residues 17-24, 86-90, and 140-143 contribute to the GTP site; these read AHIDAGKT, DTPGH, and NKMD.

Belongs to the TRAFAC class translation factor GTPase superfamily. Classic translation factor GTPase family. EF-G/EF-2 subfamily.

The protein localises to the cytoplasm. In terms of biological role, catalyzes the GTP-dependent ribosomal translocation step during translation elongation. During this step, the ribosome changes from the pre-translocational (PRE) to the post-translocational (POST) state as the newly formed A-site-bound peptidyl-tRNA and P-site-bound deacylated tRNA move to the P and E sites, respectively. Catalyzes the coordinated movement of the two tRNA molecules, the mRNA and conformational changes in the ribosome. This chain is Elongation factor G, found in Rhizobium etli (strain ATCC 51251 / DSM 11541 / JCM 21823 / NBRC 15573 / CFN 42).